The following is a 177-amino-acid chain: Translation initiation factor IF-3 (177 aa).

It belongs to the IF-3 family. Monomer.

It localises to the cytoplasm. Its function is as follows. IF-3 binds to the 30S ribosomal subunit and shifts the equilibrium between 70S ribosomes and their 50S and 30S subunits in favor of the free subunits, thus enhancing the availability of 30S subunits on which protein synthesis initiation begins. This Nostoc punctiforme (strain ATCC 29133 / PCC 73102) protein is Translation initiation factor IF-3.